Consider the following 124-residue polypeptide: Small ribosomal subunit protein uS12 (124 aa).

Position 89 is a 3-methylthioaspartic acid (Asp89).

Belongs to the universal ribosomal protein uS12 family. As to quaternary structure, part of the 30S ribosomal subunit. Contacts proteins S8 and S17. May interact with IF1 in the 30S initiation complex.

With S4 and S5 plays an important role in translational accuracy. Functionally, interacts with and stabilizes bases of the 16S rRNA that are involved in tRNA selection in the A site and with the mRNA backbone. Located at the interface of the 30S and 50S subunits, it traverses the body of the 30S subunit contacting proteins on the other side and probably holding the rRNA structure together. The combined cluster of proteins S8, S12 and S17 appears to hold together the shoulder and platform of the 30S subunit. The sequence is that of Small ribosomal subunit protein uS12 from Moorella thermoacetica (strain ATCC 39073 / JCM 9320).